The chain runs to 258 residues: UPF0246 protein YaaA (258 aa).

It belongs to the UPF0246 family.

The sequence is that of UPF0246 protein YaaA from Escherichia coli O127:H6 (strain E2348/69 / EPEC).